The chain runs to 190 residues: Major intrinsically disordered NOTCH2-binding receptor 1-like (190 aa).

Position 79 is a phosphoserine (serine 79). Asparagine 109 and asparagine 125 each carry an N-linked (GlcNAc...) asparagine glycan. Residues 169–189 (GLILLVVISILVTIVTIITFF) form a helical membrane-spanning segment.

It belongs to the MINAR family. As to quaternary structure, interacts with NOTCH2. In terms of tissue distribution, highly expressed in the auditory hair cells.

The protein localises to the lysosome membrane. It localises to the endoplasmic reticulum membrane. In terms of biological role, binds cholesterol and may regulate the distribution and homeostasis of cholesterol in hair cells. May play a role in angiogenesis. This Homo sapiens (Human) protein is Major intrinsically disordered NOTCH2-binding receptor 1-like.